Consider the following 253-residue polypeptide: 5'/3'-nucleotidase SurE (253 aa).

A divalent metal cation contacts are provided by aspartate 8, aspartate 9, serine 39, and asparagine 92.

It belongs to the SurE nucleotidase family. The cofactor is a divalent metal cation.

The protein resides in the cytoplasm. It catalyses the reaction a ribonucleoside 5'-phosphate + H2O = a ribonucleoside + phosphate. It carries out the reaction a ribonucleoside 3'-phosphate + H2O = a ribonucleoside + phosphate. The enzyme catalyses [phosphate](n) + H2O = [phosphate](n-1) + phosphate + H(+). Nucleotidase with a broad substrate specificity as it can dephosphorylate various ribo- and deoxyribonucleoside 5'-monophosphates and ribonucleoside 3'-monophosphates with highest affinity to 3'-AMP. Also hydrolyzes polyphosphate (exopolyphosphatase activity) with the preference for short-chain-length substrates (P20-25). Might be involved in the regulation of dNTP and NTP pools, and in the turnover of 3'-mononucleotides produced by numerous intracellular RNases (T1, T2, and F) during the degradation of various RNAs. The polypeptide is 5'/3'-nucleotidase SurE (Klebsiella pneumoniae (strain 342)).